We begin with the raw amino-acid sequence, 628 residues long: Hepatocyte nuclear factor 1-alpha (628 aa).

The tract at residues 1 to 31 (MVSKLSQLQTELLAALLESGLSKEALIQALG) is dimerization. The region spanning 1 to 32 (MVSKLSQLQTELLAALLESGLSKEALIQALGE) is the HNF-p1 domain. Positions 47–79 (GESCGGTRGDLTELPNGLGETRGSEDDTDDDGE) are disordered. At serine 70 the chain carries Phosphoserine. Threonine 74 is modified (phosphothreonine). Residues 87-182 (KELENLSPEE…VAQQFTHAGQ (96 aa)) form the POU-specific atypical domain. Residue serine 93 is modified to Phosphoserine. Lysine 117 is covalently cross-linked (Glycyl lysine isopeptide (Lys-Gly) (interchain with G-Cter in ubiquitin)). 4 interaction with DNA regions span residues 130–132 (QRE), 143–149 (HLSQHLN), 155–158 (KTQK), and 203–206 (RFKW). The segment at 183 to 205 (GGLIEEPTGDELPTKKGRRNRFK) is disordered. Residues 197–205 (KKGRRNRFK) carry the Nuclear localization signal motif. The segment at residues 199–279 (GRRNRFKWGP…NRRKEEAFRH (81 aa)) is a DNA-binding region (homeobox; HNF1-type). The residue at position 247 (serine 247) is a Phosphoserine. Interaction with DNA stretches follow at residues 263–265 (RVY) and 270–273 (NRRK). Disordered stretches follow at residues 284–338 (DTYN…SSSG) and 541–585 (FTSD…LSTS). Over residues 288-298 (GPPPGPGPGPA) the composition is skewed to pro residues. At serine 313 the chain carries Phosphoserine. 2 stretches are compositionally biased toward polar residues: residues 324–338 (QSAT…SSSG) and 558–575 (SPAT…NIQH).

The protein belongs to the HNF1 homeobox family. Binds DNA as a dimer. Heterotetramer with PCBD1; formed by a dimer of dimers. Interacts with PCBD1. Interacts with BHLHE41. Interacts with NR5A2. Interacts with SPOP; this interaction promotes ubiquitination and degradation of HNF1A. In terms of processing, ubiquitinated in s SPOP-dependent manner; leading to prteasomal degradation. As to expression, liver.

Its subcellular location is the nucleus. Functionally, transcriptional activator that regulates the tissue specific expression of multiple genes, especially in pancreatic islet cells and in liver. Binds to the inverted palindrome 5'-GTTAATNATTAAC-3'. Activates the transcription of CYP1A2, CYP2E1 and CYP3A11. This Rattus norvegicus (Rat) protein is Hepatocyte nuclear factor 1-alpha (Hnf1a).